The following is a 244-amino-acid chain: NAD(P)H-quinone oxidoreductase subunit K (244 aa).

[4Fe-4S] cluster is bound by residues cysteine 60, cysteine 61, cysteine 125, and cysteine 156. Residues 221-236 (SKKEKITELPENREQT) show a composition bias toward basic and acidic residues. The disordered stretch occupies residues 221-244 (SKKEKITELPENREQTEIINSEEE).

It belongs to the complex I 20 kDa subunit family. In terms of assembly, NDH-1 can be composed of about 15 different subunits; different subcomplexes with different compositions have been identified which probably have different functions. It depends on [4Fe-4S] cluster as a cofactor.

Its subcellular location is the cellular thylakoid membrane. The catalysed reaction is a plastoquinone + NADH + (n+1) H(+)(in) = a plastoquinol + NAD(+) + n H(+)(out). It catalyses the reaction a plastoquinone + NADPH + (n+1) H(+)(in) = a plastoquinol + NADP(+) + n H(+)(out). In terms of biological role, NDH-1 shuttles electrons from an unknown electron donor, via FMN and iron-sulfur (Fe-S) centers, to quinones in the respiratory and/or the photosynthetic chain. The immediate electron acceptor for the enzyme in this species is believed to be plastoquinone. Couples the redox reaction to proton translocation, and thus conserves the redox energy in a proton gradient. Cyanobacterial NDH-1 also plays a role in inorganic carbon-concentration. This is NAD(P)H-quinone oxidoreductase subunit K from Prochlorococcus marinus (strain MIT 9312).